A 243-amino-acid polypeptide reads, in one-letter code: Ubiquinone/menaquinone biosynthesis C-methyltransferase UbiE (243 aa).

Residues Thr-69, Asp-90, and 116-117 contribute to the S-adenosyl-L-methionine site; that span reads DA.

This sequence belongs to the class I-like SAM-binding methyltransferase superfamily. MenG/UbiE family.

It catalyses the reaction a 2-demethylmenaquinol + S-adenosyl-L-methionine = a menaquinol + S-adenosyl-L-homocysteine + H(+). It carries out the reaction a 2-methoxy-6-(all-trans-polyprenyl)benzene-1,4-diol + S-adenosyl-L-methionine = a 5-methoxy-2-methyl-3-(all-trans-polyprenyl)benzene-1,4-diol + S-adenosyl-L-homocysteine + H(+). It functions in the pathway quinol/quinone metabolism; menaquinone biosynthesis; menaquinol from 1,4-dihydroxy-2-naphthoate: step 2/2. Its pathway is cofactor biosynthesis; ubiquinone biosynthesis. Methyltransferase required for the conversion of demethylmenaquinol (DMKH2) to menaquinol (MKH2) and the conversion of 2-polyprenyl-6-methoxy-1,4-benzoquinol (DDMQH2) to 2-polyprenyl-3-methyl-6-methoxy-1,4-benzoquinol (DMQH2). The polypeptide is Ubiquinone/menaquinone biosynthesis C-methyltransferase UbiE (Burkholderia cenocepacia (strain HI2424)).